The sequence spans 103 residues: Large ribosomal subunit protein uL24 (103 aa).

Belongs to the universal ribosomal protein uL24 family. In terms of assembly, part of the 50S ribosomal subunit.

Its function is as follows. One of two assembly initiator proteins, it binds directly to the 5'-end of the 23S rRNA, where it nucleates assembly of the 50S subunit. Functionally, one of the proteins that surrounds the polypeptide exit tunnel on the outside of the subunit. In Syntrophomonas wolfei subsp. wolfei (strain DSM 2245B / Goettingen), this protein is Large ribosomal subunit protein uL24.